The primary structure comprises 151 residues: ALK and LTK ligand 2 (151 aa).

Positions 1–25 are cleaved as a signal peptide; it reads MRVSGRPMLLALLLLLSTVGDPGHA. 2 disulfide bridges follow: Cys-112–Cys-148 and Cys-126–Cys-135.

The protein belongs to the ALKAL family. In terms of assembly, homodimer.

It is found in the secreted. The protein localises to the cell membrane. In terms of biological role, cytokine that acts as a physiological ligand for receptor tyrosine kinases LTK and ALK, leading to their activation. Cytokine-binding is sufficient to activate LTK. In contrast, ALKAL2-driven activation of ALK is coupled with heparin-binding to ALK. Stimulation of ALK signaling is involved in neural development and regulation of energy expenditure. The chain is ALK and LTK ligand 2 from Rattus norvegicus (Rat).